Reading from the N-terminus, the 78-residue chain is Antitoxin VapB2 (78 aa).

In terms of domain architecture, SpoVT-AbrB spans 4–44 (AKIFMNGQSQAVRLPKEFRFSVKEVSVIPLGKGIVLQPLPN).

This sequence belongs to the VapB family. As to quaternary structure, forms complexes with VapC2; probably VapC2(4):VapB2(2) in the absence of DNA, and VapC2(4):VapB2(4) in the presence of DNA. Crystallizes as heterodimers with stoichiometry VapC2(4):VapB2(4) in the presence of its probable promoter DNA. The heterodimers are in contact via alternative VapC-VapC and VapB-VapB interactions. This subunit contacts DNA.

Functionally, antitoxin component of a type II toxin-antitoxin (TA) system. Upon expression in E.coli or S.cerevisiae neutralizes the effect of cognate toxin VapC2, partially inhibits the RNase activity of VapC2. The sequence is that of Antitoxin VapB2 (vapB2) from Rickettsia felis (strain ATCC VR-1525 / URRWXCal2) (Rickettsia azadi).